We begin with the raw amino-acid sequence, 244 residues long: tRNA (guanine-N(1)-)-methyltransferase (244 aa).

S-adenosyl-L-methionine contacts are provided by residues Gly-123 and 143 to 148 (LGDFVM).

It belongs to the RNA methyltransferase TrmD family. In terms of assembly, homodimer.

It localises to the cytoplasm. It carries out the reaction guanosine(37) in tRNA + S-adenosyl-L-methionine = N(1)-methylguanosine(37) in tRNA + S-adenosyl-L-homocysteine + H(+). Specifically methylates guanosine-37 in various tRNAs. In Ruegeria sp. (strain TM1040) (Silicibacter sp.), this protein is tRNA (guanine-N(1)-)-methyltransferase.